The chain runs to 285 residues: Phycobilisome 31.6 kDa linker polypeptide, phycocyanin-associated, rod (285 aa).

A PBS-linker domain is found at 1-180 (MPITTAASRL…LYRGYATSDR (180 aa)).

The protein belongs to the phycobilisome linker protein family.

The protein resides in the cellular thylakoid membrane. In terms of biological role, rod linker protein, associated with phycocyanin. Linker polypeptides determine the state of aggregation and the location of the disk-shaped phycobiliprotein units within the phycobilisome and modulate their spectroscopic properties in order to mediate a directed and optimal energy transfer. This is Phycobilisome 31.6 kDa linker polypeptide, phycocyanin-associated, rod (cpcI3) from Microchaete diplosiphon (Fremyella diplosiphon).